The chain runs to 388 residues: Succinyl-diaminopimelate desuccinylase (388 aa).

His72 provides a ligand contact to Zn(2+). Residue Asp74 is part of the active site. Asp105 serves as a coordination point for Zn(2+). The active-site Proton acceptor is Glu139. Zn(2+) is bound by residues Glu140, Glu168, and His353.

The protein belongs to the peptidase M20A family. DapE subfamily. As to quaternary structure, homodimer. It depends on Zn(2+) as a cofactor. The cofactor is Co(2+).

The enzyme catalyses N-succinyl-(2S,6S)-2,6-diaminopimelate + H2O = (2S,6S)-2,6-diaminopimelate + succinate. It functions in the pathway amino-acid biosynthesis; L-lysine biosynthesis via DAP pathway; LL-2,6-diaminopimelate from (S)-tetrahydrodipicolinate (succinylase route): step 3/3. Its function is as follows. Catalyzes the hydrolysis of N-succinyl-L,L-diaminopimelic acid (SDAP), forming succinate and LL-2,6-diaminopimelate (DAP), an intermediate involved in the bacterial biosynthesis of lysine and meso-diaminopimelic acid, an essential component of bacterial cell walls. This is Succinyl-diaminopimelate desuccinylase from Orientia tsutsugamushi (strain Boryong) (Rickettsia tsutsugamushi).